Consider the following 899-residue polypeptide: Inositol 1,4,5-triphosphate receptor associated 1 (899 aa).

Disordered regions lie at residues 32 to 110, 164 to 286, 324 to 391, and 463 to 486; these read PGTH…HRHL, RRGR…PLQH, KTAR…EEPG, and AAEQ…SKSG. Over residues 100-110 the composition is skewed to basic residues; it reads SPHRRLSHRHL. Residue serine 106 is modified to Phosphoserine. The segment at 140–172 is interaction with PRKG1; the sequence is SEEDKKKNLALLEEAKLVSERFLTRRGRKSRSS. Residues 171-180 show a composition bias toward polar residues; sequence SSLGDSPSAV. A compositionally biased stretch (low complexity) spans 181–203; that stretch reads SPNLSSGASPASSRSCSLTISTS. A compositionally biased stretch (basic and acidic residues) spans 266–281; the sequence is TVEKTKELTVEQKENF. A compositionally biased stretch (polar residues) spans 333-351; sequence PRTTAQGSGGTVSPHSLGQ. Serine 382 carries the phosphoserine modification. Residues 521-567 form an interaction with ITPR1 region; it reads NVFVQLSLAFRNDSYTLESRINQAERERNLTEENTEKELENFKASIT. Residues 534 to 632 are a coiled coil; it reads SYTLESRINQ…MQYVENLKRT (99 aa). Phosphoserine occurs at positions 670 and 683. Disordered regions lie at residues 695–722 and 757–818; these read LPGQ…SSIS and TSQE…DQGS. Residues 699-715 show a composition bias toward low complexity; that stretch reads APSSSPMPSLPALSESS. 2 stretches are compositionally biased toward basic and acidic residues: residues 759–770 and 777–787; these read QETKAKAEEEAY and GVKKTEELQDL. Residues 788–814 are compositionally biased toward acidic residues; sequence KEEEEEEQKTESPEEPEEVEETQEDEK. A helical membrane pass occupies residues 839-859; the sequence is WQVIWMMAAVMLVLSVVLGLY. The interval 867 to 899 is disordered; that stretch reads EEADGPPGRSTCSAAQRDSWWSSGLQQELPAEQ. Positions 876–892 are enriched in polar residues; the sequence is STCSAAQRDSWWSSGLQ.

Part of cGMP kinase signaling complex at least composed of ACTA2/alpha-actin, CNN1/calponin H1, PLN/phospholamban, PRKG1 and ITPR1. Interacts with PRKG1/cGKI-beta and ITPR1/IP3R type I. Interacts with HCN4; regulates HCN4 channel activity. In terms of processing, phosphorylated by PRKG1/cGKI. In terms of tissue distribution, highly expressed in smooth muscle such as aorta, colon and uterus. Detected in the brain, in the thalamus, in the hippocampus and myenteric plexus. Highly expressed in megakaryocytes. Down-regulated during macrophage differentiation.

It localises to the membrane. Its subcellular location is the cytoplasm. The protein resides in the perinuclear region. It is found in the sarcoplasmic reticulum. In terms of biological role, plays a role as NO/PRKG1-dependent regulator of IP3-induced calcium release; its phosphorylation by PRKG1 inhibits bradykinin and IP3-induced calcium release from intracellular stores. Recruits PRKG1 to the endoplasmic reticulum and may mediate the assembly of PRKG1 and ITPR1 in a macrocomplex. Involved in PRKG1 signaling cascade leading to inhibition of platelet activation and aggregation. Also mediates NO-dependent inhibition of calcium signaling in gastrointestinal smooth muscle contributing to NO-dependent relaxation. Plays a role in the regulation of cellular excitability by regulating the hyperpolarization-activated cyclic nucleotide-gated HCN4 channel activity. This is Inositol 1,4,5-triphosphate receptor associated 1 (Irag1) from Mus musculus (Mouse).